The primary structure comprises 89 residues: Small ribosomal subunit protein uS15 (89 aa).

The protein belongs to the universal ribosomal protein uS15 family. As to quaternary structure, part of the 30S ribosomal subunit. Forms a bridge to the 50S subunit in the 70S ribosome, contacting the 23S rRNA.

One of the primary rRNA binding proteins, it binds directly to 16S rRNA where it helps nucleate assembly of the platform of the 30S subunit by binding and bridging several RNA helices of the 16S rRNA. Functionally, forms an intersubunit bridge (bridge B4) with the 23S rRNA of the 50S subunit in the ribosome. The polypeptide is Small ribosomal subunit protein uS15 (Corynebacterium glutamicum (strain R)).